Reading from the N-terminus, the 496-residue chain is GTPase Der (496 aa).

2 consecutive EngA-type G domains span residues 3–166 and 209–382; these read PVIA…VGKF and VKLA…TCAT. Residues 9–16, 56–60, 118–121, 215–222, 262–266, and 327–330 contribute to the GTP site; these read GRPNVGKS, DTGGI, NKTD, DTAGV, and NKWD. The KH-like domain maps to 383–467; that stretch reads RRVGTSMLTR…PIRIQFKEGE (85 aa).

Belongs to the TRAFAC class TrmE-Era-EngA-EngB-Septin-like GTPase superfamily. EngA (Der) GTPase family. Associates with the 50S ribosomal subunit.

Functionally, GTPase that plays an essential role in the late steps of ribosome biogenesis. The polypeptide is GTPase Der (Proteus mirabilis (strain HI4320)).